We begin with the raw amino-acid sequence, 177 residues long: Myosin regulatory light chain 2 (177 aa).

Basic residues predominate over residues 1–16 (MSRKSGSRSSSKRSKK). Residues 1 to 24 (MSRKSGSRSSSKRSKKSGGGSNVF) form a disordered region. IgE-binding epitope stretches follow at residues 13 to 30 (RSKK…FTQR), 22 to 48 (NVFD…DKDG), 49 to 66 (VIGK…GRIA), 58 to 90 (TFDE…LLNM), 79 to 99 (PAPI…TGES), and 118 to 141 (NIDC…QEAD). Residues 30–65 (RQVAEFKEGFQLMDRDKDGVIGKTDLRGTFDEIGRI) enclose the EF-hand 1 domain. Positions 43, 45, 47, and 54 each coordinate Ca(2+). The EF-hand 2 domain occupies 135-170 (FSSQEADDALDQMDIDDGGKIDVQGVIQMLTAGGGD).

In terms of assembly, myosin is a hexamer of 2 heavy chains and 4 light chains. Expressed in tail muscle (at protein level).

The protein is Myosin regulatory light chain 2 of Penaeus vannamei (Whiteleg shrimp).